A 400-amino-acid chain; its full sequence is Peroxisome biogenesis factor 16 (400 aa).

The segment at Q176 to R226 is disordered. A compositionally biased stretch (low complexity) spans I190–N224.

This sequence belongs to the peroxin-16 family.

It is found in the cytoplasm. In terms of biological role, required for peroxisome membrane biogenesis. The polypeptide is Peroxisome biogenesis factor 16 (pex16) (Dictyostelium discoideum (Social amoeba)).